A 617-amino-acid polypeptide reads, in one-letter code: Type IV inositol polyphosphate 5-phosphatase 6 (617 aa).

2 disordered regions span residues 30-62 (EFQA…KNTK) and 241-330 (DFDP…VLYS). A compositionally biased stretch (low complexity) spans 242-253 (FDPSFRGSSSSH). Residues 254 to 290 (RPSDYSRRPSDYSRRPSDYSRRPSDYSRRPSDSRPSD) are compositionally biased toward basic and acidic residues. Residues 291–311 (YSRPSDYYSRPSDYSRPSDFS) show a composition bias toward low complexity. Catalytic regions lie at residues 458–473 (DRVI…IALS) and 538–553 (KRRT…WFGE).

This sequence belongs to the inositol polyphosphate 5-phosphatase family. Broadly expressed in emerging organs. Mostly localized in procambium of growing organs. Restricted to vascular differentiating cells of young organs.

It carries out the reaction a 1,2-diacyl-sn-glycero-3-phospho-(1D-myo-inositol-4,5-bisphosphate) + H2O = a 1,2-diacyl-sn-glycero-3-phospho-(1D-myo-inositol 4-phosphate) + phosphate. It catalyses the reaction a 1,2-diacyl-sn-glycero-3-phospho-(1D-myo-inositol-3,4,5-trisphosphate) + H2O = a 1,2-diacyl-sn-glycero-3-phospho-(1D-myo-inositol-3,4-bisphosphate) + phosphate. Has phosphatase activity toward PtdIns(4,5)P2 and PtdIns(3,4,5)P3. Required for the patterning of procambium and during the differentiation of vascular tissues. Acts before the acquisition of preprocambial identity. Seems to be also involved in the abscisic acid (ABA) signaling pathway. Acts redundantly with CVL1 for maintaining vascular continuity. Regulates phosphoinositide-dependent VAN3 localization. The protein is Type IV inositol polyphosphate 5-phosphatase 6 of Arabidopsis thaliana (Mouse-ear cress).